Consider the following 215-residue polypeptide: Phosphoenolpyruvate guanylyltransferase (215 aa).

Residues Thr144, Gly159, and Ser162 each coordinate phosphoenolpyruvate.

The protein belongs to the CofC family.

It carries out the reaction phosphoenolpyruvate + GTP + H(+) = enolpyruvoyl-2-diphospho-5'-guanosine + diphosphate. It participates in cofactor biosynthesis; coenzyme F420 biosynthesis. Its function is as follows. Guanylyltransferase that catalyzes the activation of phosphoenolpyruvate (PEP) as enolpyruvoyl-2-diphospho-5'-guanosine, via the condensation of PEP with GTP. It is involved in the biosynthesis of coenzyme F420, a hydride carrier cofactor. In Geodermatophilus obscurus (strain ATCC 25078 / DSM 43160 / JCM 3152 / CCUG 61914 / KCC A-0152 / KCTC 9177 / NBRC 13315 / NRRL B-3577 / G-20), this protein is Phosphoenolpyruvate guanylyltransferase.